The primary structure comprises 156 residues: NAD(P)H-quinone oxidoreductase subunit N (156 aa).

This sequence belongs to the complex I NdhN subunit family. In terms of assembly, NDH-1 can be composed of about 15 different subunits; different subcomplexes with different compositions have been identified which probably have different functions.

The protein resides in the cellular thylakoid membrane. The enzyme catalyses a plastoquinone + NADH + (n+1) H(+)(in) = a plastoquinol + NAD(+) + n H(+)(out). It carries out the reaction a plastoquinone + NADPH + (n+1) H(+)(in) = a plastoquinol + NADP(+) + n H(+)(out). Functionally, NDH-1 shuttles electrons from an unknown electron donor, via FMN and iron-sulfur (Fe-S) centers, to quinones in the respiratory and/or the photosynthetic chain. The immediate electron acceptor for the enzyme in this species is believed to be plastoquinone. Couples the redox reaction to proton translocation, and thus conserves the redox energy in a proton gradient. Cyanobacterial NDH-1 also plays a role in inorganic carbon-concentration. In Prochlorococcus marinus subsp. pastoris (strain CCMP1986 / NIES-2087 / MED4), this protein is NAD(P)H-quinone oxidoreductase subunit N.